Here is a 214-residue protein sequence, read N- to C-terminus: 3,4-dihydroxy-2-butanone 4-phosphate synthase (214 aa).

Residues 37-38, D42, 150-154, and E174 contribute to the D-ribulose 5-phosphate site; these read RE and RRGHT. Position 38 (E38) interacts with Mg(2+). Residue H153 coordinates Mg(2+).

The protein belongs to the DHBP synthase family. Homodimer. Requires Mg(2+) as cofactor. Mn(2+) serves as cofactor.

The enzyme catalyses D-ribulose 5-phosphate = (2S)-2-hydroxy-3-oxobutyl phosphate + formate + H(+). It functions in the pathway cofactor biosynthesis; riboflavin biosynthesis; 2-hydroxy-3-oxobutyl phosphate from D-ribulose 5-phosphate: step 1/1. Its function is as follows. Catalyzes the conversion of D-ribulose 5-phosphate to formate and 3,4-dihydroxy-2-butanone 4-phosphate. This chain is 3,4-dihydroxy-2-butanone 4-phosphate synthase, found in Nitratidesulfovibrio vulgaris (strain ATCC 29579 / DSM 644 / CCUG 34227 / NCIMB 8303 / VKM B-1760 / Hildenborough) (Desulfovibrio vulgaris).